The sequence spans 132 residues: Small ribosomal subunit protein uS13 (132 aa).

A compositionally biased stretch (basic residues) spans 101–125 (RGLPVRGQRTKTNARTRKGPRKTVA). The disordered stretch occupies residues 101–132 (RGLPVRGQRTKTNARTRKGPRKTVANKKIETR).

This sequence belongs to the universal ribosomal protein uS13 family. Part of the 30S ribosomal subunit. Forms a loose heterodimer with protein S19. Forms two bridges to the 50S subunit in the 70S ribosome.

In terms of biological role, located at the top of the head of the 30S subunit, it contacts several helices of the 16S rRNA. In the 70S ribosome it contacts the 23S rRNA (bridge B1a) and protein L5 of the 50S subunit (bridge B1b), connecting the 2 subunits; these bridges are implicated in subunit movement. Contacts the tRNAs in the A and P-sites. This Ureaplasma urealyticum serovar 10 (strain ATCC 33699 / Western) protein is Small ribosomal subunit protein uS13.